We begin with the raw amino-acid sequence, 575 residues long: Delta-selinene-like synthase, chloroplastic (575 aa).

(2E,6E)-farnesyl diphosphate contacts are provided by Arg288, Asp325, Asp329, Arg466, and Asp469. Positions 325 and 329 each coordinate Mg(2+). The DDXXD motif motif lies at 325-329 (DDLYD). Mg(2+) is bound by residues Asp469 and Glu477.

It belongs to the terpene synthase family. Tpsb subfamily. Monomer. It depends on Mg(2+) as a cofactor. Mn(2+) serves as cofactor.

Its subcellular location is the plastid. The protein resides in the chloroplast. The enzyme catalyses (2E,6E)-farnesyl diphosphate = (+)-delta-selinene + diphosphate. It functions in the pathway secondary metabolite biosynthesis; terpenoid biosynthesis. The protein operates within terpene metabolism; oleoresin biosynthesis. Its function is as follows. Sesquiterpene synthase (sesqui-TPS) involved in the biosynthesis of sesquiterpene natural products. Catalyzes the conversion of (2E)-geranyl diphosphate (GPP) into delta-selinene. The chain is Delta-selinene-like synthase, chloroplastic from Picea sitchensis (Sitka spruce).